The sequence spans 991 residues: Phosphate metabolism protein 7 (991 aa).

The Extracellular portion of the chain corresponds to 1 to 9; the sequence is MADSSSTSA. A helical transmembrane segment spans residues 10–30; that stretch reads FISTLIIYGLTAVVFVWLFLL. The Cytoplasmic portion of the chain corresponds to 31 to 91; that stretch reads LRPKNRRVYE…TSVDGYFLLR (61 aa). The helical transmembrane segment at 92 to 112 threads the bilayer; that stretch reads YIGIVGSLSFVGCLLLLPILL. Residues 113–138 are Extracellular-facing; sequence PVNATNGNNLQGFELLSFSNVTNKNR. 2 N-linked (GlcNAc...) asparagine glycosylation sites follow: asparagine 115 and asparagine 132. Residues 139–159 traverse the membrane as a helical segment; it reads FYAHVFLSWIFFGLFTYVIYK. Residues 160 to 388 are Cytoplasmic-facing; sequence ELYYYVVFRH…ERHSRRAVAN (229 aa). A helical transmembrane segment spans residues 389–409; sequence TIMVLLIIFWAFPVAVVGIIS. The Extracellular segment spans residues 410–437; that stretch reads NVNFLTDKVPFLRFINNMPTFLMGVITG. A helical transmembrane segment spans residues 438 to 458; the sequence is LLPTIALVVLMSLVPPFIVML. The Cytoplasmic segment spans residues 459-471; that stretch reads GKLSGCVTRQETD. Residues 472-492 traverse the membrane as a helical segment; that stretch reads LYSQAWYYAFAVIQIFLVVTA. The Extracellular portion of the chain corresponds to 493–523; that stretch reads TSSASSTVDSIIDRPRSAMTLLANNLPKASN. Residues 524 to 544 form a helical membrane-spanning segment; the sequence is FYIMYFILKGLTGPTWTILQA. Over 545-582 the chain is Cytoplasmic; the sequence is VNLLLSKVLGRVLDSTPRQKWNRYNTLATPRMGIVYPG. Residues 583–603 form a helical membrane-spanning segment; it reads IEILVCIYICYSIIAPILLFF. Position 604 (serine 604) is a topological domain, extracellular. The chain crosses the membrane as a helical span at residues 605 to 625; that stretch reads TVMLTLLYVAYLYNLNYVFGF. The Cytoplasmic segment spans residues 626–637; the sequence is SFDLKGRNYPRA. A helical transmembrane segment spans residues 638–658; sequence LFQIFVGIYLSEVCLLGLFIM. Over 659–661 the chain is Extracellular; it reads AKT. A helical transmembrane segment spans residues 662-682; the sequence is WGPLVLEVFWIVVTALAHIYM. Topologically, residues 683–991 are cytoplasmic; that stretch reads KRKFIPLFDA…PPDYEPEAKK (309 aa). The segment at 749–787 is disordered; sequence KANLIPDNDGSSENGTPSNPFESGSERASLSGSNAESDS. Over residues 757–785 the composition is skewed to polar residues; the sequence is DGSSENGTPSNPFESGSERASLSGSNAES.

The protein belongs to the CSC1 (TC 1.A.17) family.

The protein localises to the cell membrane. Its function is as follows. Acts as an osmosensitive calcium-permeable cation channel. This is Phosphate metabolism protein 7 (PHM7) from Saccharomyces cerevisiae (strain ATCC 204508 / S288c) (Baker's yeast).